The primary structure comprises 246 residues: Ubiquinone biosynthesis O-methyltransferase (246 aa).

The S-adenosyl-L-methionine site is built by Arg36, Gly60, Asp81, and Leu123.

This sequence belongs to the methyltransferase superfamily. UbiG/COQ3 family.

It carries out the reaction a 3-demethylubiquinol + S-adenosyl-L-methionine = a ubiquinol + S-adenosyl-L-homocysteine + H(+). The enzyme catalyses a 3-(all-trans-polyprenyl)benzene-1,2-diol + S-adenosyl-L-methionine = a 2-methoxy-6-(all-trans-polyprenyl)phenol + S-adenosyl-L-homocysteine + H(+). Its pathway is cofactor biosynthesis; ubiquinone biosynthesis. In terms of biological role, O-methyltransferase that catalyzes the 2 O-methylation steps in the ubiquinone biosynthetic pathway. In Rickettsia typhi (strain ATCC VR-144 / Wilmington), this protein is Ubiquinone biosynthesis O-methyltransferase.